Here is a 1007-residue protein sequence, read N- to C-terminus: Ephrin type-A receptor 10 (1007 aa).

The first 22 residues, 1 to 22 (METGAGPHPLRLFVCLIPLCLA), serve as a signal peptide directing secretion. Over 23–565 (LLLGPGRPGT…APGSRDQSPA (543 aa)) the chain is Extracellular. The 182-residue stretch at 35-216 (EVILLDSKAS…YYKQCRATVR (182 aa)) folds into the Eph LBD domain. Asparagine 311 carries an N-linked (GlcNAc...) asparagine glycan. Disordered regions lie at residues 323–343 (ARSP…APRD) and 467–486 (PQSV…PGTN). 2 Fibronectin type-III domains span residues 340 to 452 (APRD…TGPG) and 456 to 554 (EEDE…TPGE). Asparagine 486 is a glycosylation site (N-linked (GlcNAc...) asparagine). The helical transmembrane segment at 566–586 (VVVTVVTISALLVLGSVMSVL) threads the bilayer. At 587-1007 (AIWRRPCDGK…LQLQGQGVQV (421 aa)) the chain is on the cytoplasmic side. The Protein kinase domain maps to 644 to 899 (VTLEKSLGAG…PRFSQIHSIL (256 aa)). The region spanning 932 to 996 (PSFGSVGAWL…LSGISALQTR (65 aa)) is the SAM domain.

The protein belongs to the protein kinase superfamily. Tyr protein kinase family. Ephrin receptor subfamily. Expressed in the cochlea, in the organ of Corti, spiral ganglion, and stria vascularis.

It localises to the cell membrane. The enzyme catalyses L-tyrosyl-[protein] + ATP = O-phospho-L-tyrosyl-[protein] + ADP + H(+). Its function is as follows. Receptor for members of the ephrin-A family. Binds to EFNA3, EFNA4 and EFNA5. The sequence is that of Ephrin type-A receptor 10 (Epha10) from Mus musculus (Mouse).